The sequence spans 232 residues: Ribose-5-phosphate isomerase A (232 aa).

Residues 34-37, 89-92, and 102-105 contribute to the substrate site; these read TGST, DGAD, and KGGG. Glu111 acts as the Proton acceptor in catalysis. Substrate is bound at residue Lys129.

It belongs to the ribose 5-phosphate isomerase family. Homodimer.

It carries out the reaction aldehydo-D-ribose 5-phosphate = D-ribulose 5-phosphate. It participates in carbohydrate degradation; pentose phosphate pathway; D-ribose 5-phosphate from D-ribulose 5-phosphate (non-oxidative stage): step 1/1. Catalyzes the reversible conversion of ribose-5-phosphate to ribulose 5-phosphate. This is Ribose-5-phosphate isomerase A from Protochlamydia amoebophila (strain UWE25).